Consider the following 201-residue polypeptide: Lipopolysaccharide core heptose(II)-phosphate phosphatase (201 aa).

The signal sequence occupies residues Met1 to Ser35.

The protein belongs to the phosphoglycerate mutase family. Ais subfamily.

Its subcellular location is the periplasm. The protein operates within bacterial outer membrane biogenesis; lipopolysaccharide metabolism. Its function is as follows. Catalyzes the dephosphorylation of heptose(II) of the outer membrane lipopolysaccharide core. The protein is Lipopolysaccharide core heptose(II)-phosphate phosphatase of Salmonella paratyphi A (strain AKU_12601).